The following is a 307-amino-acid chain: Elongation factor Ts (307 aa).

An involved in Mg(2+) ion dislocation from EF-Tu region spans residues 80-83 (TDFV).

It belongs to the EF-Ts family.

The protein localises to the cytoplasm. Its function is as follows. Associates with the EF-Tu.GDP complex and induces the exchange of GDP to GTP. It remains bound to the aminoacyl-tRNA.EF-Tu.GTP complex up to the GTP hydrolysis stage on the ribosome. This chain is Elongation factor Ts, found in Variovorax paradoxus (strain S110).